Consider the following 243-residue polypeptide: Probable transcriptional regulatory protein BAPKO_0024/BafPKo_0025 (243 aa).

This sequence belongs to the TACO1 family.

It localises to the cytoplasm. In Borreliella afzelii (strain PKo) (Borrelia afzelii), this protein is Probable transcriptional regulatory protein BAPKO_0024/BafPKo_0025.